A 329-amino-acid polypeptide reads, in one-letter code: Fructose-1,6-bisphosphatase class 1 (329 aa).

Mg(2+) contacts are provided by Glu84, Asp103, Leu105, and Asp106. Substrate contacts are provided by residues 106 to 109, Asn196, and Lys262; that span reads DGSS. Glu268 contacts Mg(2+).

The protein belongs to the FBPase class 1 family. Homotetramer. The cofactor is Mg(2+).

It is found in the cytoplasm. It catalyses the reaction beta-D-fructose 1,6-bisphosphate + H2O = beta-D-fructose 6-phosphate + phosphate. The protein operates within carbohydrate biosynthesis; gluconeogenesis. The sequence is that of Fructose-1,6-bisphosphatase class 1 from Shewanella pealeana (strain ATCC 700345 / ANG-SQ1).